Consider the following 1316-residue polypeptide: DNA-directed RNA polymerase subunit beta' (1316 aa).

The Zn(2+) site is built by Cys60, Cys62, Cys75, and Cys78. The segment at Glu183–Arg209 is disordered. Mg(2+)-binding residues include Asp535, Asp537, and Asp539. Positions 890, 966, 973, and 976 each coordinate Zn(2+).

It belongs to the RNA polymerase beta' chain family. In terms of assembly, the RNAP catalytic core consists of 2 alpha, 1 beta, 1 beta' and 1 omega subunit. When a sigma factor is associated with the core the holoenzyme is formed, which can initiate transcription. Requires Mg(2+) as cofactor. It depends on Zn(2+) as a cofactor.

The catalysed reaction is RNA(n) + a ribonucleoside 5'-triphosphate = RNA(n+1) + diphosphate. Functionally, DNA-dependent RNA polymerase catalyzes the transcription of DNA into RNA using the four ribonucleoside triphosphates as substrates. This chain is DNA-directed RNA polymerase subunit beta', found in Mycolicibacterium gilvum (strain PYR-GCK) (Mycobacterium gilvum (strain PYR-GCK)).